Here is a 527-residue protein sequence, read N- to C-terminus: Splicing factor MUD2 (527 aa).

Positions aspartate 36–arginine 169 are disordered. A compositionally biased stretch (basic and acidic residues) spans threonine 42–lysine 55. Serine 49 carries the post-translational modification Phosphoserine. Residues arginine 60–glutamine 85 are compositionally biased toward polar residues. The segment covering serine 94–tyrosine 109 has biased composition (basic and acidic residues). The span at serine 110–proline 122 shows a compositional bias: polar residues. Basic and acidic residues-rich tracts occupy residues arginine 125 to glycine 141 and arginine 155 to arginine 169. The RRM domain maps to leucine 424–threonine 511.

MSL5, MUD2 and PRP40 interact to form the commitment complex 2 (CC2), a precursor of mature spliceosomes.

In terms of biological role, splicing factor that contacts pre-mRNA directly and is a component of the pre-mRNA-U1 snRNP complex (commitment complex 2) that forms during early spliceosome assembly in yeast extracts. The sequence is that of Splicing factor MUD2 (MUD2) from Saccharomyces cerevisiae (strain ATCC 204508 / S288c) (Baker's yeast).